The sequence spans 69 residues: DNA-directed RNA polymerase subunit epsilon (69 aa).

It belongs to the RNA polymerase subunit epsilon family. RNAP is composed of a core of 2 alpha, a beta and a beta' subunit. The core is associated with a delta subunit, and at least one of epsilon or omega. When a sigma factor is associated with the core the holoenzyme is formed, which can initiate transcription.

The catalysed reaction is RNA(n) + a ribonucleoside 5'-triphosphate = RNA(n+1) + diphosphate. Functionally, a non-essential component of RNA polymerase (RNAP). The polypeptide is DNA-directed RNA polymerase subunit epsilon (Halalkalibacterium halodurans (strain ATCC BAA-125 / DSM 18197 / FERM 7344 / JCM 9153 / C-125) (Bacillus halodurans)).